The primary structure comprises 502 residues: Type II secretion system protein E (502 aa).

263–270 (GPTGSGKT) lines the ATP pocket. Residues Cys396, Cys399, Cys429, and Cys432 each coordinate Zn(2+). Residues 461–480 (SSEQEMTRHARTSGPSIRDD) are disordered.

This sequence belongs to the GSP E family. Homodimer. Dimerization is directed by a relatively short domain near the extreme N-terminus and is essential for extracellular protein secretion. May form homooligomers. Interacts with XcpY/GspL. Forms an inner membrane platform subcomplex with XcpS/GspF, XcpY/GspL and XcpZ/GspM. Requires Zn(2+) as cofactor.

The protein localises to the cell inner membrane. The catalysed reaction is ATP + H2O + cellular proteinSide 1 = ADP + phosphate + cellular proteinSide 2.. Functionally, ATPase component of the type II secretion system required for the energy-dependent secretion of extracellular factors such as proteases and toxins from the periplasm. Acts as a molecular motor to provide the energy that is required for assembly of the pseudopilus and the extrusion of substrates generated in the cytoplasm. The protein is Type II secretion system protein E (xcpR) of Pseudomonas aeruginosa (strain ATCC 15692 / DSM 22644 / CIP 104116 / JCM 14847 / LMG 12228 / 1C / PRS 101 / PAO1).